A 411-amino-acid chain; its full sequence is LL-diaminopimelate aminotransferase (411 aa).

Substrate is bound by residues Tyr15 and Gly42. Residues Tyr72, 108-109 (SK), Tyr132, Asn187, Tyr218, and 246-248 (SFS) contribute to the pyridoxal 5'-phosphate site. Residues Lys109, Tyr132, and Asn187 each contribute to the substrate site. At Lys249 the chain carries N6-(pyridoxal phosphate)lysine. Positions 257 and 292 each coordinate pyridoxal 5'-phosphate. Asn292 and Arg388 together coordinate substrate.

Belongs to the class-I pyridoxal-phosphate-dependent aminotransferase family. LL-diaminopimelate aminotransferase subfamily. In terms of assembly, homodimer. Pyridoxal 5'-phosphate serves as cofactor.

It carries out the reaction (2S,6S)-2,6-diaminopimelate + 2-oxoglutarate = (S)-2,3,4,5-tetrahydrodipicolinate + L-glutamate + H2O + H(+). The protein operates within amino-acid biosynthesis; L-lysine biosynthesis via DAP pathway; LL-2,6-diaminopimelate from (S)-tetrahydrodipicolinate (aminotransferase route): step 1/1. Functionally, involved in the synthesis of meso-diaminopimelate (m-DAP or DL-DAP), required for both lysine and peptidoglycan biosynthesis. Catalyzes the direct conversion of tetrahydrodipicolinate to LL-diaminopimelate. This chain is LL-diaminopimelate aminotransferase, found in Nostoc punctiforme (strain ATCC 29133 / PCC 73102).